A 205-amino-acid chain; its full sequence is Small ribosomal subunit protein uS4 (205 aa).

The segment covering 1-16 has biased composition (basic and acidic residues); sequence MSKRESSKYKIDRRMG. Residues 1–46 form a disordered region; it reads MSKRESSKYKIDRRMGENIWGRPKSPVNRREYGPGQHGQRRKGKLS. An S4 RNA-binding domain is found at 94–157; that stretch reads SRLDAIVYRA…KQLVTVLEAV (64 aa).

This sequence belongs to the universal ribosomal protein uS4 family. As to quaternary structure, part of the 30S ribosomal subunit. Contacts protein S5. The interaction surface between S4 and S5 is involved in control of translational fidelity.

In terms of biological role, one of the primary rRNA binding proteins, it binds directly to 16S rRNA where it nucleates assembly of the body of the 30S subunit. Functionally, with S5 and S12 plays an important role in translational accuracy. This chain is Small ribosomal subunit protein uS4, found in Rhizobium etli (strain ATCC 51251 / DSM 11541 / JCM 21823 / NBRC 15573 / CFN 42).